The sequence spans 150 residues: Putative F-box protein At2g33655 (150 aa).

In terms of domain architecture, F-box spans 1 to 47 (MEKMSDLPRELVEEILSRVPVKSMREVRVTCKTWNALSKHISKAEAA).

The sequence is that of Putative F-box protein At2g33655 from Arabidopsis thaliana (Mouse-ear cress).